Here is a 956-residue protein sequence, read N- to C-terminus: Glutamate receptor ionotropic, kainate 4 (956 aa).

Positions 1–20 (MPRVSAPLVLLPAWLLMVAC) are cleaved as a signal peptide. Topologically, residues 21–545 (SPHSLRIAAI…YFSSLDPFSP (525 aa)) are extracellular. 8 N-linked (GlcNAc...) asparagine glycosylation sites follow: Asn158, Asn220, Asn272, Asn286, Asn323, Asn408, Asn415, and Asn479. Residues Gly500, Thr502, and Arg507 each contribute to the L-glutamate site. The chain crosses the membrane as a helical span at residues 546-566 (GVWLFMLLAYLAVSCVLFLVA). At 567-623 (RLTPYEWYSPHPCAQGRCNLLVNQYSLGNSLWFPVGGFMQQGSTIAPRALSTRCVSG) the chain is on the cytoplasmic side. A helical membrane pass occupies residues 624–644 (VWWAFTLIIISSYTANLAAFL). Over 645–804 (TVQRMEVPIE…HRAKGLGMEN (160 aa)) the chain is Extracellular. Positions 674, 675, and 723 each coordinate L-glutamate. Residue Asn736 is glycosylated (N-linked (GlcNAc...) asparagine). A helical transmembrane segment spans residues 805–825 (IGGIFVVLICGLIVAIFMAML). At 826-956 (EFLWTLRHSE…DKTTNSSEPE (131 aa)) the chain is on the cytoplasmic side. The tract at residues 931–956 (LRARPSPARSEESLEWDKTTNSSEPE) is disordered. Basic and acidic residues predominate over residues 939-948 (RSEESLEWDK).

Belongs to the glutamate-gated ion channel (TC 1.A.10.1) family. GRIK4 subfamily. Homodimer. Can form functional heteromeric receptors with GRIK1, GRIK2 and GRIK3. Strong expression in hippocampal CA3 pyramidal cells. Low expression in hippocampal dentate granule cells, in layers II, V and VI of the cortex, and in cerebellar Purkinje cells. No expression in the striatum, reticular thalamus, hypothalamus or amygdaloid complex.

Its subcellular location is the cell membrane. It localises to the postsynaptic cell membrane. The protein resides in the presynaptic cell membrane. In terms of biological role, ionotropic glutamate receptor that functions as a cation-permeable ligand-gated ion channel, gated by L-glutamate and the glutamatergic agonist kainic acid. Cannot form functional channels on its own and shows channel activity only in heteromeric assembly with GRIK1, GRIK2 and GRIK3 subunits. The protein is Glutamate receptor ionotropic, kainate 4 (Grik4) of Rattus norvegicus (Rat).